The sequence spans 399 residues: MKRYDYPIVKTLLDTDAYKLHMQQAVFYHYKNVNVVAEFLCRGDNFLGCYANILLDQISMMRSLSLSHEEYVYMTSFPFFKKEYLHWLKKFRYNVSQVKINSYQGRLHIRISGLWKEVILWEVPILALISEVFHGNFSPEITSQSALQYLDIKLKKFFNRTKYIDLSHLKIVDFGTRRRFSYDVQYSIVKRLKESFPFLIGSSNYHIARILKIKPVGTQAHEWFQAHQQIGSNLKNSQILALQKWLYQYKNHLGIALTDSITMDAFLDDFNLHFASFYQGIRHDSGDPVKWGEKALKHYEKLGIDPCTKTLLFSDNLDFKKIISLYKKFHKKINVIFGIGTKLTCDIPYVKPLNIVIKLVECNGKPVAKISDSPGKTFCLDRIFLKNLCQVFNVSLKNR.

His221 bears the Phosphohistidine; by autocatalysis mark.

It belongs to the NAPRTase family. Post-translationally, transiently phosphorylated on a His residue during the reaction cycle. Phosphorylation strongly increases the affinity for substrates and increases the rate of nicotinate D-ribonucleotide production. Dephosphorylation regenerates the low-affinity form of the enzyme, leading to product release.

It carries out the reaction nicotinate + 5-phospho-alpha-D-ribose 1-diphosphate + ATP + H2O = nicotinate beta-D-ribonucleotide + ADP + phosphate + diphosphate. Its pathway is cofactor biosynthesis; NAD(+) biosynthesis; nicotinate D-ribonucleotide from nicotinate: step 1/1. Functionally, catalyzes the synthesis of beta-nicotinate D-ribonucleotide from nicotinate and 5-phospho-D-ribose 1-phosphate at the expense of ATP. The chain is Nicotinate phosphoribosyltransferase from Buchnera aphidicola subsp. Acyrthosiphon pisum (strain 5A).